Here is a 441-residue protein sequence, read N- to C-terminus: ATP-dependent protease ATPase subunit HslU (441 aa).

Residues I18, 60-65 (GVGKTE), D254, E319, and R391 each bind ATP.

This sequence belongs to the ClpX chaperone family. HslU subfamily. In terms of assembly, a double ring-shaped homohexamer of HslV is capped on each side by a ring-shaped HslU homohexamer. The assembly of the HslU/HslV complex is dependent on binding of ATP.

It localises to the cytoplasm. Functionally, ATPase subunit of a proteasome-like degradation complex; this subunit has chaperone activity. The binding of ATP and its subsequent hydrolysis by HslU are essential for unfolding of protein substrates subsequently hydrolyzed by HslV. HslU recognizes the N-terminal part of its protein substrates and unfolds these before they are guided to HslV for hydrolysis. This is ATP-dependent protease ATPase subunit HslU from Shewanella pealeana (strain ATCC 700345 / ANG-SQ1).